Reading from the N-terminus, the 301-residue chain is Chitin deacetylase 1 (301 aa).

The N-terminal stretch at 1–24 is a signal peptide; sequence MKIFNTIQSVLFAAFFLKQGNCLA. Residues Asn-26, Asn-50, and Asn-68 are each glycosylated (N-linked (GlcNAc...) asparagine). An intrachain disulfide couples Cys-107 to Cys-290. Positions 108-288 constitute a NodB homology domain; that stretch reads FKLSQTFDDG…LIGSDQLTIA (181 aa). The active-site Proton acceptor is the Asp-115. Asp-115 is an acetate binding site. Co(2+)-binding residues include Asp-116, His-162, and His-166. A glycan (N-linked (GlcNAc...) asparagine) is linked at Asn-189. Tyr-203 is a binding site for acetate. Catalysis depends on His-263, which acts as the Proton donor.

Belongs to the polysaccharide deacetylase family. Co(2+) is required as a cofactor.

The protein localises to the prospore. The catalysed reaction is [(1-&gt;4)-N-acetyl-beta-D-glucosaminyl](n) + n H2O = chitosan + n acetate. Its function is as follows. Hydrolyzes the N-acetamido groups of N-acetyl-D-glucosamine residues in chitin to form chitosan and acetate. Chitosan is a component of the spore wall. The sequence is that of Chitin deacetylase 1 from Saccharomyces cerevisiae (strain ATCC 204508 / S288c) (Baker's yeast).